A 784-amino-acid polypeptide reads, in one-letter code: LPS-assembly protein LptD (784 aa).

An N-terminal signal peptide occupies residues 1 to 24; it reads MKKRIPTLLATMIATALYSQQGLA. 2 disulfide bridges follow: C31-C724 and C173-C725.

Belongs to the LptD family. In terms of assembly, component of the lipopolysaccharide transport and assembly complex. Interacts with LptE and LptA. Post-translationally, contains two intramolecular disulfide bonds.

It is found in the cell outer membrane. Together with LptE, is involved in the assembly of lipopolysaccharide (LPS) at the surface of the outer membrane. The sequence is that of LPS-assembly protein LptD from Shigella sonnei (strain Ss046).